The primary structure comprises 215 residues: 3-isopropylmalate dehydratase small subunit (215 aa).

The protein belongs to the LeuD family. LeuD type 1 subfamily. As to quaternary structure, heterodimer of LeuC and LeuD.

It catalyses the reaction (2R,3S)-3-isopropylmalate = (2S)-2-isopropylmalate. It functions in the pathway amino-acid biosynthesis; L-leucine biosynthesis; L-leucine from 3-methyl-2-oxobutanoate: step 2/4. Catalyzes the isomerization between 2-isopropylmalate and 3-isopropylmalate, via the formation of 2-isopropylmaleate. The chain is 3-isopropylmalate dehydratase small subunit from Cellvibrio japonicus (strain Ueda107) (Pseudomonas fluorescens subsp. cellulosa).